Consider the following 362-residue polypeptide: Talin rod domain-containing protein 1 (362 aa).

Residues 1–27 form a disordered region; the sequence is MASGSAGKPTGEAASPAPGSAVGGASS. Position 2 is an N-acetylalanine (Ala2). The segment covering 9–27 has biased composition (low complexity); it reads PTGEAASPAPGSAVGGASS.

In terms of assembly, may homodimerize. Interacts with F-actin. In terms of tissue distribution, ubiquitous.

Its function is as follows. Actin-binding protein which may have an oncogenic function and regulates cell proliferation, migration and invasion in cancer cells. The protein is Talin rod domain-containing protein 1 of Mus musculus (Mouse).